Reading from the N-terminus, the 115-residue chain is Glutaredoxin 4 (115 aa).

Residues 5–107 (IEKIQRQIAE…QLIKETAAKY (103 aa)) enclose the Glutaredoxin domain. Lysine 22 contributes to the glutathione binding site. [2Fe-2S] cluster is bound at residue cysteine 30. Residues arginine 59, phenylalanine 71, and 84–85 (CD) each bind glutathione.

This sequence belongs to the glutaredoxin family. Monothiol subfamily. Homodimer.

It is found in the cytoplasm. In terms of biological role, monothiol glutaredoxin involved in the biogenesis of iron-sulfur clusters. This chain is Glutaredoxin 4 (grxD), found in Shigella flexneri.